The primary structure comprises 473 residues: 3-isopropylmalate dehydratase large subunit (473 aa).

The disordered stretch occupies residues 289 to 319 (TVTWGTTPGQTAGITEPIPDPDDLPEEDRDT). A compositionally biased stretch (polar residues) spans 291–301 (TWGTTPGQTAG). Residues 307-317 (PDPDDLPEEDR) show a composition bias toward acidic residues. [4Fe-4S] cluster contacts are provided by C348, C408, and C411.

The protein belongs to the aconitase/IPM isomerase family. LeuC type 1 subfamily. Heterodimer of LeuC and LeuD. [4Fe-4S] cluster serves as cofactor.

It catalyses the reaction (2R,3S)-3-isopropylmalate = (2S)-2-isopropylmalate. Its pathway is amino-acid biosynthesis; L-leucine biosynthesis; L-leucine from 3-methyl-2-oxobutanoate: step 2/4. In terms of biological role, catalyzes the isomerization between 2-isopropylmalate and 3-isopropylmalate, via the formation of 2-isopropylmaleate. The chain is 3-isopropylmalate dehydratase large subunit from Halorubrum lacusprofundi (strain ATCC 49239 / DSM 5036 / JCM 8891 / ACAM 34).